A 297-amino-acid chain; its full sequence is D-alanine--D-alanine ligase (297 aa).

Residues 103–293 enclose the ATP-grasp domain; it reads KEILMHHRMP…FDSFVKSILE (191 aa). 129–180 contributes to the ATP binding site; sequence ISFPVAVKPSSGGSSIATFKVKSLEELENAYQQASKHGEVMIEQWVTGKEIT. 3 residues coordinate Mg(2+): D247, E260, and N262.

It belongs to the D-alanine--D-alanine ligase family. It depends on Mg(2+) as a cofactor. Mn(2+) serves as cofactor.

Its subcellular location is the cytoplasm. The enzyme catalyses 2 D-alanine + ATP = D-alanyl-D-alanine + ADP + phosphate + H(+). It functions in the pathway cell wall biogenesis; peptidoglycan biosynthesis. Cell wall formation. This is D-alanine--D-alanine ligase from Francisella philomiragia subsp. philomiragia (strain ATCC 25017 / CCUG 19701 / FSC 153 / O#319-036).